The primary structure comprises 395 residues: Lipoyl synthase, mitochondrial (395 aa).

A mitochondrion-targeting transit peptide spans 1-14; the sequence is MISLRSISRSPAVQ. 7 residues coordinate [4Fe-4S] cluster: C112, C117, C123, C142, C146, C149, and S357. Residues 127–346 enclose the Radical SAM core domain; it reads KKSEATATIM…RDTALQMGFL (220 aa).

It belongs to the radical SAM superfamily. Lipoyl synthase family. [4Fe-4S] cluster is required as a cofactor.

Its subcellular location is the mitochondrion. It carries out the reaction [[Fe-S] cluster scaffold protein carrying a second [4Fe-4S](2+) cluster] + N(6)-octanoyl-L-lysyl-[protein] + 2 oxidized [2Fe-2S]-[ferredoxin] + 2 S-adenosyl-L-methionine + 4 H(+) = [[Fe-S] cluster scaffold protein] + N(6)-[(R)-dihydrolipoyl]-L-lysyl-[protein] + 4 Fe(3+) + 2 hydrogen sulfide + 2 5'-deoxyadenosine + 2 L-methionine + 2 reduced [2Fe-2S]-[ferredoxin]. It participates in protein modification; protein lipoylation via endogenous pathway; protein N(6)-(lipoyl)lysine from octanoyl-[acyl-carrier-protein]: step 2/2. Functionally, catalyzes the radical-mediated insertion of two sulfur atoms into the C-6 and C-8 positions of the octanoyl moiety bound to the lipoyl domains of lipoate-dependent enzymes, thereby converting the octanoylated domains into lipoylated derivatives. The sequence is that of Lipoyl synthase, mitochondrial from Debaryomyces hansenii (strain ATCC 36239 / CBS 767 / BCRC 21394 / JCM 1990 / NBRC 0083 / IGC 2968) (Yeast).